Consider the following 139-residue polypeptide: MPTPSMEDHIEQIYLLIANKGYARVSDIAEALSVLPSSVTKMVQKLDKDGYLVYEKYRGLTLTPKGEKLGKRLVQRHELLEQFLRMIGVDEERIYNDVEGIEHHLSWNSIDRIADLVQVMEENPDIVKKLEASKTQHNL.

The HTH dtxR-type domain maps to 1 to 63 (MPTPSMEDHI…YEKYRGLTLT (63 aa)). Residues Asp-8, Glu-11, His-77, Glu-99, Glu-102, and His-103 each coordinate Mn(2+).

Belongs to the DtxR/MntR family. In terms of assembly, homodimer.

It localises to the cytoplasm. DNA binding is strongly activated by Mn(2+). Central regulator of manganese homeostasis. This Lysinibacillus sphaericus (strain C3-41) protein is HTH-type transcriptional regulator MntR.